A 96-amino-acid polypeptide reads, in one-letter code: Non-specific lipid-transfer protein 2G (96 aa).

Residues 1–29 (MAGMMKKQVVTALMLALVVLAAAPGGARA) form the signal peptide. 4 disulfides stabilise this stretch: cysteine 31-cysteine 63, cysteine 39-cysteine 53, cysteine 54-cysteine 89, and cysteine 65-cysteine 96.

It localises to the secreted. The protein resides in the cell wall. Functionally, transfer lipids across membranes. May play a role in plant defense or in the biosynthesis of cuticle layers. In Triticum aestivum (Wheat), this protein is Non-specific lipid-transfer protein 2G.